The sequence spans 71 residues: Translation initiation factor IF-1 (71 aa).

The S1-like domain occupies 1-71 (MANDVIEIEG…TKGRITYRFR (71 aa)).

The protein belongs to the IF-1 family. As to quaternary structure, component of the 30S ribosomal translation pre-initiation complex which assembles on the 30S ribosome in the order IF-2 and IF-3, IF-1 and N-formylmethionyl-tRNA(fMet); mRNA recruitment can occur at any time during PIC assembly.

The protein localises to the cytoplasm. In terms of biological role, one of the essential components for the initiation of protein synthesis. Stabilizes the binding of IF-2 and IF-3 on the 30S subunit to which N-formylmethionyl-tRNA(fMet) subsequently binds. Helps modulate mRNA selection, yielding the 30S pre-initiation complex (PIC). Upon addition of the 50S ribosomal subunit IF-1, IF-2 and IF-3 are released leaving the mature 70S translation initiation complex. The chain is Translation initiation factor IF-1 from Leuconostoc mesenteroides subsp. mesenteroides (strain ATCC 8293 / DSM 20343 / BCRC 11652 / CCM 1803 / JCM 6124 / NCDO 523 / NBRC 100496 / NCIMB 8023 / NCTC 12954 / NRRL B-1118 / 37Y).